The chain runs to 950 residues: Glycine dehydrogenase (decarboxylating) (950 aa).

K698 is modified (N6-(pyridoxal phosphate)lysine).

It belongs to the GcvP family. In terms of assembly, the glycine cleavage system is composed of four proteins: P, T, L and H. It depends on pyridoxal 5'-phosphate as a cofactor.

The catalysed reaction is N(6)-[(R)-lipoyl]-L-lysyl-[glycine-cleavage complex H protein] + glycine + H(+) = N(6)-[(R)-S(8)-aminomethyldihydrolipoyl]-L-lysyl-[glycine-cleavage complex H protein] + CO2. In terms of biological role, the glycine cleavage system catalyzes the degradation of glycine. The P protein binds the alpha-amino group of glycine through its pyridoxal phosphate cofactor; CO(2) is released and the remaining methylamine moiety is then transferred to the lipoamide cofactor of the H protein. The sequence is that of Glycine dehydrogenase (decarboxylating) from Neisseria meningitidis serogroup C / serotype 2a (strain ATCC 700532 / DSM 15464 / FAM18).